Reading from the N-terminus, the 311-residue chain is tRNA dimethylallyltransferase (311 aa).

Gly-12–Thr-19 contributes to the ATP binding site. Thr-14–Thr-19 provides a ligand contact to substrate. Interaction with substrate tRNA regions lie at residues Asp-37–Met-40 and Gln-161–Arg-165.

The protein belongs to the IPP transferase family. In terms of assembly, monomer. It depends on Mg(2+) as a cofactor.

The catalysed reaction is adenosine(37) in tRNA + dimethylallyl diphosphate = N(6)-dimethylallyladenosine(37) in tRNA + diphosphate. Functionally, catalyzes the transfer of a dimethylallyl group onto the adenine at position 37 in tRNAs that read codons beginning with uridine, leading to the formation of N6-(dimethylallyl)adenosine (i(6)A). The sequence is that of tRNA dimethylallyltransferase from Coxiella burnetii (strain RSA 331 / Henzerling II).